The chain runs to 426 residues: Histidine--tRNA ligase (426 aa).

This sequence belongs to the class-II aminoacyl-tRNA synthetase family. In terms of assembly, homodimer.

The protein localises to the cytoplasm. It carries out the reaction tRNA(His) + L-histidine + ATP = L-histidyl-tRNA(His) + AMP + diphosphate + H(+). This chain is Histidine--tRNA ligase, found in Picosynechococcus sp. (strain ATCC 27264 / PCC 7002 / PR-6) (Agmenellum quadruplicatum).